A 129-amino-acid chain; its full sequence is Small ribosomal subunit protein uS11 (129 aa).

The protein belongs to the universal ribosomal protein uS11 family. In terms of assembly, part of the 30S ribosomal subunit. Interacts with proteins S7 and S18. Binds to IF-3.

In terms of biological role, located on the platform of the 30S subunit, it bridges several disparate RNA helices of the 16S rRNA. Forms part of the Shine-Dalgarno cleft in the 70S ribosome. The sequence is that of Small ribosomal subunit protein uS11 from Xanthobacter autotrophicus (strain ATCC BAA-1158 / Py2).